Here is a 399-residue protein sequence, read N- to C-terminus: Tryptophan synthase beta chain (399 aa).

Lysine 92 carries the N6-(pyridoxal phosphate)lysine modification.

It belongs to the TrpB family. In terms of assembly, tetramer of two alpha and two beta chains. Pyridoxal 5'-phosphate is required as a cofactor.

The enzyme catalyses (1S,2R)-1-C-(indol-3-yl)glycerol 3-phosphate + L-serine = D-glyceraldehyde 3-phosphate + L-tryptophan + H2O. It functions in the pathway amino-acid biosynthesis; L-tryptophan biosynthesis; L-tryptophan from chorismate: step 5/5. The beta subunit is responsible for the synthesis of L-tryptophan from indole and L-serine. This Thiobacillus denitrificans (strain ATCC 25259 / T1) protein is Tryptophan synthase beta chain.